We begin with the raw amino-acid sequence, 246 residues long: Probable transcriptional regulatory protein APP7_1210 (246 aa).

Belongs to the TACO1 family.

Its subcellular location is the cytoplasm. This Actinobacillus pleuropneumoniae serotype 7 (strain AP76) protein is Probable transcriptional regulatory protein APP7_1210.